We begin with the raw amino-acid sequence, 203 residues long: GTP-binding protein ypt1 (203 aa).

GTP-binding positions include 15–23 (GDSGVGKSC), 33–40 (YTESYIST), 63–67 (DTAGQ), 121–124 (NKSD), and 151–153 (SAK). The Effector region motif lies at 37 to 45 (YISTIGVDF). Residues 180–203 (NNTKASVNVSPGHGVSNNSSGGCC) form a disordered region. 2 S-geranylgeranyl cysteine lipidation sites follow: cysteine 202 and cysteine 203.

Belongs to the small GTPase superfamily. Rab family.

Its subcellular location is the endoplasmic reticulum membrane. The protein localises to the golgi apparatus membrane. It is found in the cytoplasm. The protein resides in the preautophagosomal structure membrane. Its activity is regulated as follows. Rab activation is generally mediated by a guanine exchange factor (GEF), while inactivation through hydrolysis of bound GTP is catalyzed by a GTPase activating protein (GAP). Its function is as follows. The small GTPases Rab are key regulators of intracellular membrane trafficking, from the formation of transport vesicles to their fusion with membranes. Rabs cycle between an inactive GDP-bound form and an active GTP-bound form that is able to recruit to membranes different set of downstream effectors directly responsible for vesicle formation, movement, tethering and fusion. Ypt-1 regulates the trafficking of secretory vesicles from the endoplasmic reticulum (ER) to the Golgi. Plays a role in the initial events of the autophagic vacuole development which take place at specialized regions of the endoplasmic reticulum. Also involved in the recycling of membrane proteins. The polypeptide is GTP-binding protein ypt1 (ypt-1) (Neurospora crassa (strain ATCC 24698 / 74-OR23-1A / CBS 708.71 / DSM 1257 / FGSC 987)).